Here is a 293-residue protein sequence, read N- to C-terminus: Elongation factor Ts (293 aa).

The segment at threonine 80–valine 83 is involved in Mg(2+) ion dislocation from EF-Tu.

Belongs to the EF-Ts family.

It localises to the cytoplasm. Associates with the EF-Tu.GDP complex and induces the exchange of GDP to GTP. It remains bound to the aminoacyl-tRNA.EF-Tu.GTP complex up to the GTP hydrolysis stage on the ribosome. This chain is Elongation factor Ts, found in Burkholderia cenocepacia (strain HI2424).